The following is a 120-amino-acid chain: MVKLTSIAAGVAAIAATASATTTIAQSDERVNLVELGVYVSDIRAHLAQYYMFQAAHPTETYPVEVAEAVFNYGDFTTMLTGIAPDQVTRMITGVPWYSSRLKPAISKALSKDGIYTIAN.

Residues 7–24 (IAAGVAAIAATASATTTI) form a helical membrane-spanning segment.

It belongs to the SRP1/TIP1 family. Seripauperin subfamily.

Its subcellular location is the membrane. This Saccharomyces cerevisiae (strain ATCC 204508 / S288c) (Baker's yeast) protein is Seripauperin-4 (PAU4).